A 222-amino-acid chain; its full sequence is Deoxyribose-phosphate aldolase (222 aa).

Aspartate 89 functions as the Proton donor/acceptor in the catalytic mechanism. Residue lysine 151 is the Schiff-base intermediate with acetaldehyde of the active site. The Proton donor/acceptor role is filled by lysine 180.

It belongs to the DeoC/FbaB aldolase family. DeoC type 1 subfamily.

It is found in the cytoplasm. The catalysed reaction is 2-deoxy-D-ribose 5-phosphate = D-glyceraldehyde 3-phosphate + acetaldehyde. Its pathway is carbohydrate degradation; 2-deoxy-D-ribose 1-phosphate degradation; D-glyceraldehyde 3-phosphate and acetaldehyde from 2-deoxy-alpha-D-ribose 1-phosphate: step 2/2. Its function is as follows. Catalyzes a reversible aldol reaction between acetaldehyde and D-glyceraldehyde 3-phosphate to generate 2-deoxy-D-ribose 5-phosphate. This is Deoxyribose-phosphate aldolase from Acholeplasma laidlawii (strain PG-8A).